A 185-amino-acid chain; its full sequence is HTH-type transcriptional regulator SACOL2593 (185 aa).

One can recognise an HTH tetR-type domain in the interval 6-66 (KENRQRIEEI…YVIQRDLDIF (61 aa)). Positions 29-48 (SMNRIAKELGIGMGTLYRHF) form a DNA-binding region, H-T-H motif.

The sequence is that of HTH-type transcriptional regulator SACOL2593 from Staphylococcus aureus (strain COL).